The sequence spans 627 residues: DEAD-box ATP-dependent RNA helicase 35A (627 aa).

Low complexity-rich tracts occupy residues 1 to 15 (MAAATASSPATAAAA) and 52 to 61 (SSSAAEAASD). Disordered regions lie at residues 1-23 (MAAATASSPATAAAANSDDEDNY) and 40-85 (LRRL…LEAS). Positions 62–72 (LPPPPPPPPNQ) are enriched in pro residues. Positions 182–210 (RDFRDLRLPEPMLRKLREKGIVQPTPIQV) match the Q motif motif. One can recognise a Helicase ATP-binding domain in the interval 213–397 (LPVVLSGRDM…KSALVKPVIV (185 aa)). Residue 226–233 (AFTGSGKT) coordinates ATP. The DEAD box signature appears at 345–348 (DEAD). Residues 408–568 (DVIQEVEYVK…RIPPVLAELN (161 aa)) form the Helicase C-terminal domain. The CCHC-type zinc-finger motif lies at 584 to 601 (KGCAYCGGLGHRVTDCPK).

The protein belongs to the DEAD box helicase family. DDX41 subfamily.

It catalyses the reaction ATP + H2O = ADP + phosphate + H(+). In Oryza sativa subsp. japonica (Rice), this protein is DEAD-box ATP-dependent RNA helicase 35A.